The primary structure comprises 206 residues: Small ribosomal subunit protein uS4 (206 aa).

Residues 96–156 (SRLDNVVYRM…NKSKNQSRIK (61 aa)) enclose the S4 RNA-binding domain.

Belongs to the universal ribosomal protein uS4 family. Part of the 30S ribosomal subunit. Contacts protein S5. The interaction surface between S4 and S5 is involved in control of translational fidelity.

Its function is as follows. One of the primary rRNA binding proteins, it binds directly to 16S rRNA where it nucleates assembly of the body of the 30S subunit. Functionally, with S5 and S12 plays an important role in translational accuracy. This is Small ribosomal subunit protein uS4 from Buchnera aphidicola subsp. Acyrthosiphon pisum (strain 5A).